The sequence spans 260 residues: Kallikrein-8 (260 aa).

An N-terminal signal peptide occupies residues 1 to 28 (MGRPRPRAAKTWMFLLLLGGAWAGHSRA). A propeptide spanning residues 29 to 32 (QEDK) is cleaved from the precursor. A Peptidase S1 domain is found at 33–257 (VLGGHECQPH…YLDWIKKIIG (225 aa)). 6 disulfides stabilise this stretch: C39/C173, C58/C74, C145/C246, C152/C218, C184/C198, and C208/C233. The Charge relay system role is filled by H73. N110 is a glycosylation site (N-linked (GlcNAc...) asparagine). D120 acts as the Charge relay system in catalysis. The Charge relay system role is filled by S212.

The protein belongs to the peptidase S1 family. Kallikrein subfamily. Interacts with SPINK9. As to expression, isoform 1 is predominantly expressed in the pancreas. Isoform 2 is expressed in adult brain and hippocampus. Isoform 1 and isoform 2 are found in fetal brain and placenta. Detected in salivary gland, uterus, thymus, breast, testis and kidney but not in spleen, liver, lung or normal ovarian tissue. Displays an 11.5-fold increase in Alzheimer disease hippocampus compared to controls and is overexpressed in some ovarian carcinomas. Expressed at low levels in normal skin while high levels are found in psoriasis vulgaris, seborrheic keratosis, lichen planus and squamous cell carcinoma skin samples. Expressed in the keratinocytes.

The protein resides in the secreted. It localises to the cytoplasm. It carries out the reaction Cleavage of amide substrates following the basic amino acids Arg or Lys at the P1 position, with a preference for Arg over Lys.. Its activity is regulated as follows. Inhibited by a range of serine protease inhibitors including antipain, aprotinin, leupeptin, benzamidine and soybean trypsin inhibitor. In terms of biological role, serine protease which is capable of degrading a number of proteins such as casein, fibrinogen, kininogen, fibronectin and collagen type IV. Also cleaves L1CAM in response to increased neural activity. Induces neurite outgrowth and fasciculation of cultured hippocampal neurons. Plays a role in the formation and maturation of orphan and small synaptic boutons in the Schaffer-collateral pathway, regulates Schaffer-collateral long-term potentiation in the hippocampus and is required for memory acquisition and synaptic plasticity. Involved in skin desquamation and keratinocyte proliferation. Plays a role in the secondary phase of pathogenesis following spinal cord injury. The chain is Kallikrein-8 (KLK8) from Homo sapiens (Human).